Consider the following 359-residue polypeptide: WAT1-related protein At4g16620 (359 aa).

10 helical membrane passes run 5–25 (ETLIEAGIIGGLAGAQVIYAG), 41–61 (LLIVILCTFASVLLITPLAFL), 77–97 (IKLVLVALAGVTLFQGLFLEG), 105–125 (MATAMPNLCPAFIFVIAWAAG), 143–163 (TVLCVMGALIMSLMHSTTATL), 183–203 (ILGCLYLLLAICGLSSSIVLQ), 206–226 (ILAEFPAPISMFSMVSLMGGI), 246–266 (VIGLGHLVGYAILGGLVSGGG), 279–299 (PVIVSLFSPIATVVCVVVSAF), and 305–325 (FNLGSFAGMALMFGGLYFVLW). An EamA 1 domain is found at 30–154 (LSQLLSLGID…LCVMGALIMS (125 aa)). The EamA 2 domain occupies 206 to 324 (ILAEFPAPIS…LMFGGLYFVL (119 aa)).

It belongs to the drug/metabolite transporter (DMT) superfamily. Plant drug/metabolite exporter (P-DME) (TC 2.A.7.4) family.

The protein resides in the membrane. In Arabidopsis thaliana (Mouse-ear cress), this protein is WAT1-related protein At4g16620.